The primary structure comprises 69 residues: Putative membrane protein insertion efficiency factor (69 aa).

Belongs to the UPF0161 family.

It is found in the cell membrane. Functionally, could be involved in insertion of integral membrane proteins into the membrane. The sequence is that of Putative membrane protein insertion efficiency factor from Clostridium kluyveri (strain NBRC 12016).